The primary structure comprises 269 residues: Hemin import ATP-binding protein HmuV (269 aa).

Positions 5 to 242 constitute an ABC transporter domain; it reads IETHSVTMRI…GLIRKVFEVC (238 aa). 37–44 contributes to the ATP binding site; it reads GPNGAGKS.

The protein belongs to the ABC transporter superfamily. Heme (hemin) importer (TC 3.A.1.14.5) family. The complex is composed of two ATP-binding proteins (HmuV), two transmembrane proteins (HmuU) and a solute-binding protein (HmuT).

Its subcellular location is the cell inner membrane. Its function is as follows. Part of the ABC transporter complex HmuTUV involved in hemin import. Responsible for energy coupling to the transport system. The polypeptide is Hemin import ATP-binding protein HmuV (Nitrobacter winogradskyi (strain ATCC 25391 / DSM 10237 / CIP 104748 / NCIMB 11846 / Nb-255)).